A 112-amino-acid polypeptide reads, in one-letter code: T cell receptor alpha variable 9-1 (112 aa).

The N-terminal stretch at 1–20 (MNSSPGPAIALFLMFGGING) is a signal peptide. Positions 21 to 112 (DSVVQTEGQV…DSAVYFCALS (92 aa)) constitute an Ig-like domain. Asn-41 carries N-linked (GlcNAc...) asparagine glycosylation. A disulfide bond links Cys-42 and Cys-109.

Alpha-beta TR is a heterodimer composed of an alpha and beta chain; disulfide-linked. The alpha-beta TR is associated with the transmembrane signaling CD3 coreceptor proteins to form the TR-CD3 (TcR or TCR). The assembly of alpha-beta TR heterodimers with CD3 occurs in the endoplasmic reticulum where a single alpha-beta TR heterodimer associates with one CD3D-CD3E heterodimer, one CD3G-CD3E heterodimer and one CD247 homodimer forming a stable octameric structure. CD3D-CD3E and CD3G-CD3E heterodimers preferentially associate with TR alpha and TR beta chains, respectively. The association of the CD247 homodimer is the last step of TcR assembly in the endoplasmic reticulum and is required for transport to the cell surface.

It is found in the cell membrane. V region of the variable domain of T cell receptor (TR) alpha chain that participates in the antigen recognition. Alpha-beta T cell receptors are antigen specific receptors which are essential to the immune response and are present on the cell surface of T lymphocytes. Recognize peptide-major histocompatibility (MH) (pMH) complexes that are displayed by antigen presenting cells (APC), a prerequisite for efficient T cell adaptive immunity against pathogens. Binding of alpha-beta TR to pMH complex initiates TR-CD3 clustering on the cell surface and intracellular activation of LCK that phosphorylates the ITAM motifs of CD3G, CD3D, CD3E and CD247 enabling the recruitment of ZAP70. In turn ZAP70 phosphorylates LAT, which recruits numerous signaling molecules to form the LAT signalosome. The LAT signalosome propagates signal branching to three major signaling pathways, the calcium, the mitogen-activated protein kinase (MAPK) kinase and the nuclear factor NF-kappa-B (NF-kB) pathways, leading to the mobilization of transcription factors that are critical for gene expression and essential for T cell growth and differentiation. The T cell repertoire is generated in the thymus, by V-(D)-J rearrangement. This repertoire is then shaped by intrathymic selection events to generate a peripheral T cell pool of self-MH restricted, non-autoaggressive T cells. Post-thymic interaction of alpha-beta TR with the pMH complexes shapes TR structural and functional avidity. The chain is T cell receptor alpha variable 9-1 from Homo sapiens (Human).